A 92-amino-acid chain; its full sequence is MSNRRSRQSSSAPRISDNQMIDLVSKLRQILPEIGQRRRSDKASASKVLQETCNYIRNLNREVDNLSERLSQLLESVDEDSPEAAVIRSLLM.

Positions arginine 4–leucine 59 constitute a bHLH domain.

In terms of assembly, interacts with IBH1 and HFR1. Expressed in roots, leaves, stems and flowers.

It is found in the nucleus. Functionally, atypical and probable non DNA-binding bHLH transcription factor that integrates multiple signaling pathways to regulate cell elongation and plant development. Binds IBH1, forming a pair of antagonistic bHLH transcription factors that function downstream of BZR1 to mediate brassinosteroid regulation of cell elongation. Regulates light responses by binding and inhibiting the activity of the bHLH transcription factor HFR1, a critical regulator of light signaling and shade avoidance. May have a regulatory role in various aspects of gibberellin-dependent growth and development. The polypeptide is Transcription factor PRE1 (PRE1) (Arabidopsis thaliana (Mouse-ear cress)).